A 278-amino-acid polypeptide reads, in one-letter code: 2,5-diketo-D-gluconic acid reductase A (278 aa).

The Proton donor role is filled by tyrosine 50. Histidine 108 is a binding site for substrate. 188 to 242 (GPLGQGKYDLFGAEPVTAAAAAHGKTPAQAVLRWHLQKGFVVFPKSVRRERLEEN) contacts NADP(+). Residues 259–278 (DAMDPGDGSGRVSAHPDEVD) are disordered.

It belongs to the aldo/keto reductase family. In terms of assembly, monomer.

The protein localises to the cytoplasm. The enzyme catalyses 2-dehydro-L-idonate + NADP(+) = 2,5-didehydro-D-gluconate + NADPH + H(+). With respect to regulation, inhibited by Zn(2+), Fe(3+), Cu(2+) and Ni(2+). Its function is as follows. Catalyzes the reduction of 2,5-diketo-D-gluconic acid (25DKG) to 2-keto-L-gulonic acid (2KLG). 5-keto-D-fructose and dihydroxyacetone can also serve as substrates. 25DKGR-A exhibits a greater selectivity for the substrate and higher thermal stability than 25DKGR-B. The polypeptide is 2,5-diketo-D-gluconic acid reductase A (dkgA) (Corynebacterium sp. (strain ATCC 31090)).